The chain runs to 398 residues: 8-amino-7-oxononanoate synthase (398 aa).

Residue arginine 23 coordinates substrate. 110-111 (GY) lines the pyridoxal 5'-phosphate pocket. A substrate-binding site is contributed by histidine 135. Serine 181, histidine 209, and threonine 237 together coordinate pyridoxal 5'-phosphate. Lysine 240 carries the post-translational modification N6-(pyridoxal phosphate)lysine. Threonine 354 provides a ligand contact to substrate.

The protein belongs to the class-II pyridoxal-phosphate-dependent aminotransferase family. BioF subfamily. Homodimer. Requires pyridoxal 5'-phosphate as cofactor.

The enzyme catalyses 6-carboxyhexanoyl-[ACP] + L-alanine + H(+) = (8S)-8-amino-7-oxononanoate + holo-[ACP] + CO2. It participates in cofactor biosynthesis; biotin biosynthesis. Catalyzes the decarboxylative condensation of pimeloyl-[acyl-carrier protein] and L-alanine to produce 8-amino-7-oxononanoate (AON), [acyl-carrier protein], and carbon dioxide. In Anaeromyxobacter dehalogenans (strain 2CP-1 / ATCC BAA-258), this protein is 8-amino-7-oxononanoate synthase.